A 535-amino-acid chain; its full sequence is T-complex protein 1 subunit beta (535 aa).

The residue at position 2 (alanine 2) is an N-acetylalanine. Serine 3 carries the phosphoserine modification. Position 13 is an N6-acetyllysine (lysine 13). Glycine 44 serves as a coordination point for ADP. An ATP-binding site is contributed by glycine 44. Position 60 is a phosphoserine (serine 60). Aspartate 97 is a binding site for Mg(2+). ADP-binding residues include glycine 98, threonine 99, threonine 100, and serine 101. Residues glycine 98, threonine 99, and threonine 100 each coordinate ATP. The residue at position 154 (lysine 154) is an N6-acetyllysine. Serine 168 and serine 169 together coordinate ADP. Lysine 181 carries the post-translational modification N6-acetyllysine. Residue lysine 248 forms a Glycyl lysine isopeptide (Lys-Gly) (interchain with G-Cter in SUMO2) linkage. Residue serine 260 is modified to Phosphoserine. Residue threonine 261 is modified to Phosphothreonine. Positions 410, 495, and 500 each coordinate ADP. Positions 495 and 500 each coordinate ATP.

The protein belongs to the TCP-1 chaperonin family. As to quaternary structure, component of the chaperonin-containing T-complex (TRiC), a hexadecamer composed of two identical back-to-back stacked rings enclosing a protein folding chamber. Each ring is made up of eight different subunits: TCP1/CCT1, CCT2, CCT3, CCT4, CCT5, CCT6A/CCT6, CCT7, CCT8. Interacts with PACRG. Interacts with FLCN. Interacts with DLEC1. Interacts with SVEP1.

The protein resides in the cytoplasm. It catalyses the reaction ATP + H2O = ADP + phosphate + H(+). Its function is as follows. Component of the chaperonin-containing T-complex (TRiC), a molecular chaperone complex that assists the folding of actin, tubulin and other proteins upon ATP hydrolysis. The TRiC complex mediates the folding of WRAP53/TCAB1, thereby regulating telomere maintenance. As part of the TRiC complex may play a role in the assembly of BBSome, a complex involved in ciliogenesis regulating transports vesicles to the cilia. This is T-complex protein 1 subunit beta (Cct2) from Rattus norvegicus (Rat).